We begin with the raw amino-acid sequence, 383 residues long: Na(+)/H(+) antiporter (383 aa).

12 helical membrane passes run 1–21 (MEFI…SHIS), 24–44 (FGIP…QAGL), 51–71 (ILVH…AGLE), 83–103 (PGMF…WLTG), 112–132 (EAIF…VEVL), 145–165 (TILG…SFSL), 186–206 (LFYF…LMSL), 216–236 (IIIM…LIGL), 262–282 (VEAL…GLEV), 291–311 (ILFI…GGYI), 323–343 (ALMV…ILQI), and 353–373 (HYYS…PLIL).

This sequence belongs to the monovalent cation:proton antiporter 2 (CPA2) transporter (TC 2.A.37) family.

It is found in the cell membrane. In terms of biological role, na(+)/H(+) antiporter that extrudes sodium in exchange for external protons. Can also transport lithium. The chain is Na(+)/H(+) antiporter (napA) from Enterococcus hirae.